Reading from the N-terminus, the 469-residue chain is Phosphatidylinositol 4-kinase type 2-beta (469 aa).

A disordered region spans residues 1 to 84 (MAEACEPTRP…LDRTRTTSSE (84 aa)). Serine 37 bears the Phosphoserine mark. The 332-residue stretch at 108 to 439 (GVFPERISQG…AQMPCVIVEC (332 aa)) folds into the PI3K/PI4K catalytic domain. The interval 114–120 (ISQGSSG) is G-loop. Residues serine 121 and lysine 136 each contribute to the ATP site. The important for substrate binding stretch occupies residues 141-143 (EPY). The tract at residues 149–162 (KWTKYVHKVCCPCC) is important for interaction with membranes. ATP contacts are provided by residues 245–248 (QLFV) and 259–260 (RR). Residues 252–260 (KEAEYWLRR) form an important for interaction with membranes region. A catalytic loop region spans residues 289-297 (RNTDRGNDN). Positions 330 to 350 (AIDNGLAFPFKHPDEWRAYPF) are activation loop. Aspartate 332 provides a ligand contact to ATP. Residues 345–354 (WRAYPFHWAW) form an important for interaction with membranes region.

Belongs to the PI3/PI4-kinase family. Type II PI4K subfamily.

The protein resides in the cytoplasm. It localises to the cytosol. Its subcellular location is the golgi apparatus membrane. It is found in the endoplasmic reticulum membrane. The protein localises to the cell membrane. The protein resides in the early endosome membrane. The catalysed reaction is a 1,2-diacyl-sn-glycero-3-phospho-(1D-myo-inositol) + ATP = a 1,2-diacyl-sn-glycero-3-phospho-(1D-myo-inositol 4-phosphate) + ADP + H(+). Functionally, together with PI4K2A and the type III PI4Ks (PIK4CA and PIK4CB) it contributes to the overall PI4-kinase activity of the cell. This contribution may be especially significant in plasma membrane, endosomal and Golgi compartments. The phosphorylation of phosphatidylinositol (PI) to PI4P is the first committed step in the generation of phosphatidylinositol 4,5-bisphosphate (PIP2), a precursor of the second messenger inositol 1,4,5-trisphosphate (InsP3). Contributes to the production of InsP3 in stimulated cells and is likely to be involved in the regulation of vesicular trafficking. The protein is Phosphatidylinositol 4-kinase type 2-beta (Pi4k2b) of Mus musculus (Mouse).